We begin with the raw amino-acid sequence, 141 residues long: Hemoglobin subunit alpha (141 aa).

The region spanning 1–141 is the Globin domain; the sequence is VLSAADKTNV…VATVLTSKYR (141 aa). S3 bears the Phosphoserine mark. K7 is subject to N6-succinyllysine. T8 carries the phosphothreonine modification. Position 11 is an N6-succinyllysine (K11). K16 is subject to N6-acetyllysine; alternate. The residue at position 16 (K16) is an N6-succinyllysine; alternate. A Phosphotyrosine modification is found at Y24. S35 is modified (phosphoserine). K40 carries the N6-succinyllysine modification. Residue S49 is modified to Phosphoserine. Residue H58 participates in O2 binding. H87 lines the heme b pocket. Residue S102 is modified to Phosphoserine. A Phosphothreonine modification is found at T108. S124 carries the phosphoserine modification. Residues T134 and T137 each carry the phosphothreonine modification. Phosphoserine is present on S138.

It belongs to the globin family. As to quaternary structure, heterotetramer of two alpha chains and two beta chains. Red blood cells.

In terms of biological role, involved in oxygen transport from the lung to the various peripheral tissues. Functionally, hemopressin acts as an antagonist peptide of the cannabinoid receptor CNR1. Hemopressin-binding efficiently blocks cannabinoid receptor CNR1 and subsequent signaling. The protein is Hemoglobin subunit alpha (HBA) of Ctenodactylus gundi (Northern gundi).